Reading from the N-terminus, the 350-residue chain is Nicotinate-nucleotide--dimethylbenzimidazole phosphoribosyltransferase (350 aa).

Glutamate 316 (proton acceptor) is an active-site residue.

Belongs to the CobT family.

The catalysed reaction is 5,6-dimethylbenzimidazole + nicotinate beta-D-ribonucleotide = alpha-ribazole 5'-phosphate + nicotinate + H(+). The protein operates within nucleoside biosynthesis; alpha-ribazole biosynthesis; alpha-ribazole from 5,6-dimethylbenzimidazole: step 1/2. Catalyzes the synthesis of alpha-ribazole-5'-phosphate from nicotinate mononucleotide (NAMN) and 5,6-dimethylbenzimidazole (DMB). The polypeptide is Nicotinate-nucleotide--dimethylbenzimidazole phosphoribosyltransferase (Pseudomonas syringae pv. tomato (strain ATCC BAA-871 / DC3000)).